Here is a 371-residue protein sequence, read N- to C-terminus: tRNA (guanine(26)-N(2))-dimethyltransferase (371 aa).

Residues 4-368 form the Trm1 methyltransferase domain; that stretch reads VEVTEGRTRF…APLPVLEKVV (365 aa). The S-adenosyl-L-methionine site is built by Arg-41, Arg-66, Asp-82, Asp-108, and Ala-109. 4 residues coordinate Zn(2+): Cys-237, Cys-240, Cys-256, and Cys-259.

This sequence belongs to the class I-like SAM-binding methyltransferase superfamily. Trm1 family.

It catalyses the reaction guanosine(26) in tRNA + 2 S-adenosyl-L-methionine = N(2)-dimethylguanosine(26) in tRNA + 2 S-adenosyl-L-homocysteine + 2 H(+). Functionally, dimethylates a single guanine residue at position 26 of a number of tRNAs using S-adenosyl-L-methionine as donor of the methyl groups. This Methanoculleus marisnigri (strain ATCC 35101 / DSM 1498 / JR1) protein is tRNA (guanine(26)-N(2))-dimethyltransferase.